The chain runs to 95 residues: Integration host factor subunit beta (95 aa).

A disordered region spans residues 52-95; that stretch reads SLHHRPPRVGRNPKTGESVHLPSRRVPHFKPGKELRDRVNSIKD. Positions 82–95 are enriched in basic and acidic residues; that stretch reads PGKELRDRVNSIKD.

It belongs to the bacterial histone-like protein family. In terms of assembly, heterodimer of an alpha and a beta chain.

In terms of biological role, this protein is one of the two subunits of integration host factor, a specific DNA-binding protein that functions in genetic recombination as well as in transcriptional and translational control. This chain is Integration host factor subunit beta, found in Methylococcus capsulatus (strain ATCC 33009 / NCIMB 11132 / Bath).